The chain runs to 126 residues: Large ribosomal subunit protein bL12 (126 aa).

Belongs to the bacterial ribosomal protein bL12 family. In terms of assembly, homodimer. Part of the ribosomal stalk of the 50S ribosomal subunit. Forms a multimeric L10(L12)X complex, where L10 forms an elongated spine to which 2 to 4 L12 dimers bind in a sequential fashion. Binds GTP-bound translation factors.

Functionally, forms part of the ribosomal stalk which helps the ribosome interact with GTP-bound translation factors. Is thus essential for accurate translation. The polypeptide is Large ribosomal subunit protein bL12 (Koribacter versatilis (strain Ellin345)).